The chain runs to 141 residues: 16 kDa protein (141 aa).

Residues 100-119 (TVKKSRNSKPSKKKFKERKE) are disordered. A compositionally biased stretch (basic residues) spans 102–115 (KKSRNSKPSKKKFK).

The polypeptide is 16 kDa protein (Tobacco rattle virus (strain PLB)).